The following is a 187-amino-acid chain: UPF0340 protein SGO_0411 (187 aa).

Belongs to the UPF0340 family.

This Streptococcus gordonii (strain Challis / ATCC 35105 / BCRC 15272 / CH1 / DL1 / V288) protein is UPF0340 protein SGO_0411.